Reading from the N-terminus, the 134-residue chain is D-ribose pyranase (134 aa).

Residue H20 is the Proton donor of the active site. Residues D28, H101, and 123–125 (YCN) contribute to the substrate site.

Belongs to the RbsD / FucU family. RbsD subfamily. Homodecamer.

The protein resides in the cytoplasm. It carries out the reaction beta-D-ribopyranose = beta-D-ribofuranose. Its pathway is carbohydrate metabolism; D-ribose degradation; D-ribose 5-phosphate from beta-D-ribopyranose: step 1/2. Its function is as follows. Catalyzes the interconversion of beta-pyran and beta-furan forms of D-ribose. This chain is D-ribose pyranase, found in Pseudomonas fluorescens (strain SBW25).